Consider the following 323-residue polypeptide: uncharacterized protein (323 aa).

The next 2 helical transmembrane spans lie at 232–252 (LASY…FIVL) and 267–287 (SLIV…GVIG).

Belongs to the glycosyltransferase 2 family. GtrB subfamily.

It localises to the cell membrane. This is an uncharacterized protein from Bacillus subtilis (strain 168).